A 708-amino-acid polypeptide reads, in one-letter code: Leukotoxin translocation ATP-binding protein LktB (708 aa).

Residues 1–126 (MEANHQRNDL…ACYQGQLILV (126 aa)) form the Peptidase C39 domain. In terms of domain architecture, ABC transmembrane type-1 spans 155 to 437 (FLETLIVSIF…LAQLWQDFQQ (283 aa)). Helical transmembrane passes span 159–179 (LIVS…FQVV), 192–212 (LNII…LSGL), 270–290 (ALTS…MWYY), 296–316 (LVIL…SPIL), and 389–409 (VMVI…LSIG). The ABC transporter domain maps to 469-704 (ISFKNIRFRY…SNGLYSYLHQ (236 aa)). Position 503 to 510 (503 to 510 (GRSGSGKS)) interacts with ATP.

The protein belongs to the ABC transporter superfamily. Protein-1 exporter (TC 3.A.1.109) family. As to quaternary structure, homodimer.

It is found in the cell inner membrane. It carries out the reaction ATP + H2O + proteinSide 1 = ADP + phosphate + proteinSide 2.. Part of the ABC transporter complex LktBD involved in leukotoxin export. Transmembrane domains (TMD) form a pore in the inner membrane and the ATP-binding domain (NBD) is responsible for energy generation. The sequence is that of Leukotoxin translocation ATP-binding protein LktB (lktB) from Mannheimia haemolytica (Pasteurella haemolytica).